A 213-amino-acid polypeptide reads, in one-letter code: ATP phosphoribosyltransferase (213 aa).

This sequence belongs to the ATP phosphoribosyltransferase family. Short subfamily. Heteromultimer composed of HisG and HisZ subunits.

It localises to the cytoplasm. It carries out the reaction 1-(5-phospho-beta-D-ribosyl)-ATP + diphosphate = 5-phospho-alpha-D-ribose 1-diphosphate + ATP. The protein operates within amino-acid biosynthesis; L-histidine biosynthesis; L-histidine from 5-phospho-alpha-D-ribose 1-diphosphate: step 1/9. Catalyzes the condensation of ATP and 5-phosphoribose 1-diphosphate to form N'-(5'-phosphoribosyl)-ATP (PR-ATP). Has a crucial role in the pathway because the rate of histidine biosynthesis seems to be controlled primarily by regulation of HisG enzymatic activity. This Nitrosococcus oceani (strain ATCC 19707 / BCRC 17464 / JCM 30415 / NCIMB 11848 / C-107) protein is ATP phosphoribosyltransferase.